The sequence spans 282 residues: Elongation factor Ts (282 aa).

Positions Thr-79–Val-82 are involved in Mg(2+) ion dislocation from EF-Tu.

The protein belongs to the EF-Ts family.

The protein localises to the cytoplasm. Its function is as follows. Associates with the EF-Tu.GDP complex and induces the exchange of GDP to GTP. It remains bound to the aminoacyl-tRNA.EF-Tu.GTP complex up to the GTP hydrolysis stage on the ribosome. The sequence is that of Elongation factor Ts from Shewanella woodyi (strain ATCC 51908 / MS32).